The primary structure comprises 266 residues: Undecaprenyl-diphosphatase 1 (266 aa).

The next 8 helical transmembrane spans lie at 1-21, 39-59, 83-103, 113-133, 141-161, 189-209, 218-238, and 244-264; these read MSII…FLPI, QGLA…VIYF, SKLG…GLLL, SAWV…YADA, IYQL…VAMI, FLLA…ELAL, TLLL…YMFL, and MGML…IVFL.

Belongs to the UppP family.

The protein localises to the cell inner membrane. The catalysed reaction is di-trans,octa-cis-undecaprenyl diphosphate + H2O = di-trans,octa-cis-undecaprenyl phosphate + phosphate + H(+). Its function is as follows. Catalyzes the dephosphorylation of undecaprenyl diphosphate (UPP). Confers resistance to bacitracin. The chain is Undecaprenyl-diphosphatase 1 from Pseudoalteromonas translucida (strain TAC 125).